The primary structure comprises 219 residues: Peroxiredoxin-5, mitochondrial (219 aa).

Residues 1 to 57 (MRLGWLRVLGCRPGSVVSRATIVEGASTTAAGTRGCLEGILEWTFGGVRGFRSAAVA) constitute a mitochondrion transit peptide. In terms of domain architecture, Thioredoxin spans 61 to 219 (IKVGDAIPSV…SLAPNILSQL (159 aa)). Lys80 is subject to N6-acetyllysine. An N6-acetyllysine; alternate modification is found at Lys88. Lys88 carries the N6-succinyllysine; alternate modification. Cys105 serves as the catalytic Cysteine sulfenic acid (-SOH) intermediate. Cys105 carries the S-palmitoyl cysteine lipid modification. Residues Cys105 and Cys209 are joined by a disulfide bond. Position 121 is an N6-succinyllysine (Lys121). The residue at position 187 (Ser187) is a Phosphoserine. The short motif at 217-219 (SQL) is the Microbody targeting signal element.

The protein belongs to the peroxiredoxin family. Prx5 subfamily. Monomer. Post-translationally, S-palmitoylated. Palmitoylation occurs on the active site, inhibiting its reactivity; therefore PRDX5 palmitoylation status determines its antioxidant capacity. S-palmitoylated. Depalmitoylated by ABHD10.

It is found in the mitochondrion. The protein localises to the cytoplasm. It localises to the peroxisome matrix. It catalyses the reaction a hydroperoxide + [thioredoxin]-dithiol = an alcohol + [thioredoxin]-disulfide + H2O. Functionally, thiol-specific peroxidase that catalyzes the reduction of hydrogen peroxide and organic hydroperoxides to water and alcohols, respectively. Plays a role in cell protection against oxidative stress by detoxifying peroxides and as sensor of hydrogen peroxide-mediated signaling events. This Bos taurus (Bovine) protein is Peroxiredoxin-5, mitochondrial (PRDX5).